Consider the following 346-residue polypeptide: uncharacterized protein (346 aa).

A signal peptide spans 1-27 (MKFNKISLSVSTALLAAGLAVSGSANA).

This is an uncharacterized protein from Haemophilus influenzae (strain ATCC 51907 / DSM 11121 / KW20 / Rd).